We begin with the raw amino-acid sequence, 414 residues long: Serine/threonine transporter SstT (414 aa).

Transmembrane regions (helical) follow at residues 16–36 (GSLVKQILVGLVLGILLAWVS), 46–66 (LGTLFVGALKAVAPILVLMLV), 84–104 (ILFLYLLGTFSAALAAVVFSF), 143–163 (ALLNANYIGILVWAVGLGFAL), 180–200 (AVTFMVKLVIRFAPVGIFGLV), 219–239 (LVVLIGCMLLVALVVNPLLVF), 300–320 (MAGAAITITVLTLAAVHTLGV), and 332–352 (VVASLCACGASGVAGGSLLLI).

The protein belongs to the dicarboxylate/amino acid:cation symporter (DAACS) (TC 2.A.23) family.

It is found in the cell inner membrane. It catalyses the reaction L-serine(in) + Na(+)(in) = L-serine(out) + Na(+)(out). It carries out the reaction L-threonine(in) + Na(+)(in) = L-threonine(out) + Na(+)(out). Its function is as follows. Involved in the import of serine and threonine into the cell, with the concomitant import of sodium (symport system). This Salmonella arizonae (strain ATCC BAA-731 / CDC346-86 / RSK2980) protein is Serine/threonine transporter SstT.